Here is a 433-residue protein sequence, read N- to C-terminus: Glutamate-1-semialdehyde 2,1-aminomutase (433 aa).

The residue at position 273 (Lys-273) is an N6-(pyridoxal phosphate)lysine.

The protein belongs to the class-III pyridoxal-phosphate-dependent aminotransferase family. HemL subfamily. As to quaternary structure, homodimer. Pyridoxal 5'-phosphate serves as cofactor.

It is found in the cytoplasm. It carries out the reaction (S)-4-amino-5-oxopentanoate = 5-aminolevulinate. It functions in the pathway porphyrin-containing compound metabolism; protoporphyrin-IX biosynthesis; 5-aminolevulinate from L-glutamyl-tRNA(Glu): step 2/2. In Polynucleobacter necessarius subsp. necessarius (strain STIR1), this protein is Glutamate-1-semialdehyde 2,1-aminomutase.